We begin with the raw amino-acid sequence, 147 residues long: uncharacterized protein (147 aa).

This is an uncharacterized protein from Acidianus filamentous virus 2 (isolate Italy/Pozzuoli) (AFV-2).